The primary structure comprises 380 residues: Chaperone protein DnaJ (380 aa).

Residues 5-72 enclose the J domain; it reads DFYEVLGVAK…NKRAAYDQYG (68 aa). The CR-type zinc-finger motif lies at 140-218; that stretch reads GKDAQIRIPS…CGGQGKVKRQ (79 aa). 8 residues coordinate Zn(2+): Cys-153, Cys-156, Cys-170, Cys-173, Cys-192, Cys-195, Cys-206, and Cys-209. 4 CXXCXGXG motif repeats span residues 153–160, 170–177, 192–199, and 206–213; these read CDTCHGSG, CTTCNGMG, CPHCRGTG, and CTSCGGQG. The interval 359–380 is disordered; that stretch reads KGGAKHSPSGESWTDRLKSFFS. Residues 371 to 380 show a composition bias toward basic and acidic residues; the sequence is WTDRLKSFFS.

It belongs to the DnaJ family. Homodimer. Zn(2+) serves as cofactor.

The protein resides in the cytoplasm. Functionally, participates actively in the response to hyperosmotic and heat shock by preventing the aggregation of stress-denatured proteins and by disaggregating proteins, also in an autonomous, DnaK-independent fashion. Unfolded proteins bind initially to DnaJ; upon interaction with the DnaJ-bound protein, DnaK hydrolyzes its bound ATP, resulting in the formation of a stable complex. GrpE releases ADP from DnaK; ATP binding to DnaK triggers the release of the substrate protein, thus completing the reaction cycle. Several rounds of ATP-dependent interactions between DnaJ, DnaK and GrpE are required for fully efficient folding. Also involved, together with DnaK and GrpE, in the DNA replication of plasmids through activation of initiation proteins. This is Chaperone protein DnaJ from Delftia acidovorans (strain DSM 14801 / SPH-1).